A 316-amino-acid polypeptide reads, in one-letter code: Phosphatidylinositol mannoside acyltransferase (316 aa).

H137 serves as the catalytic Proton acceptor. Hexadecanoyl-CoA is bound by residues H137 and R175. Residue E211 is part of the active site. E240 lines the hexadecanoyl-CoA pocket.

This sequence belongs to the LpxL/LpxM/LpxP family.

The protein localises to the cell inner membrane. It catalyses the reaction a 2,6-O-bis(alpha-D-mannopyranosyl)-1-phosphatidyl-1D-myo-inositol + an acyl-CoA = a 2-O-(alpha-D-mannosyl)-6-O-(6-O-acyl-alpha-D-mannosyl)-1-phosphatidyl-1D-myo-inositol + CoA. The enzyme catalyses a 1,2-diacyl-sn-glycero-3-phospho-[alpha-D-mannopyranosyl-(1&lt;-&gt;6)-D-myo-inositol] + an acyl-CoA = a 1,2-diacyl-sn-glycero-3-phospho-[alpha-D-6-acyl-mannopyranosyl-(1&lt;-&gt;6)-D-myo-inositol] + CoA. The protein operates within phospholipid metabolism; phosphatidylinositol metabolism. Its function is as follows. Catalyzes the transfer of a palmitoyl moiety from palmitoyl-CoA to the 6-position of the mannose ring linked to the 2-position of myo-inositol in phosphatidyl-myo-inositol monomannoside (PIM1) or dimannoside (PIM2). The sequence is that of Phosphatidylinositol mannoside acyltransferase from Mycobacterium tuberculosis (strain CDC 1551 / Oshkosh).